The sequence spans 699 residues: Elongation factor G (699 aa).

The region spanning 8-288 is the tr-type G domain; that stretch reads EDYRNFGIMA…AVCEYLPSPL (281 aa). Residues 17-24, 86-90, and 140-143 each bind GTP; these read AHIDAGKT, DTPGH, and NKMD.

This sequence belongs to the TRAFAC class translation factor GTPase superfamily. Classic translation factor GTPase family. EF-G/EF-2 subfamily.

It localises to the cytoplasm. Functionally, catalyzes the GTP-dependent ribosomal translocation step during translation elongation. During this step, the ribosome changes from the pre-translocational (PRE) to the post-translocational (POST) state as the newly formed A-site-bound peptidyl-tRNA and P-site-bound deacylated tRNA move to the P and E sites, respectively. Catalyzes the coordinated movement of the two tRNA molecules, the mRNA and conformational changes in the ribosome. This Allorhizobium ampelinum (strain ATCC BAA-846 / DSM 112012 / S4) (Agrobacterium vitis (strain S4)) protein is Elongation factor G.